Consider the following 350-residue polypeptide: Small ribosomal subunit biogenesis GTPase RsgA (350 aa).

A compositionally biased stretch (polar residues) spans 1 to 17 (MSKNKLSKGQQRRVQAN). The disordered stretch occupies residues 1 to 35 (MSKNKLSKGQQRRVQANHQRRLRTDRKPELDDSQL). The CP-type G domain maps to 103 to 273 (TSVLTRPDLY…VIDSPGVREF (171 aa)). Residues 159–162 (NKID) and 213–221 (GQSGVGKSS) contribute to the GTP site. Zn(2+) is bound by residues Cys297, Cys302, His304, and Cys310.

It belongs to the TRAFAC class YlqF/YawG GTPase family. RsgA subfamily. Monomer. Associates with 30S ribosomal subunit, binds 16S rRNA. The cofactor is Zn(2+).

It is found in the cytoplasm. Functionally, one of several proteins that assist in the late maturation steps of the functional core of the 30S ribosomal subunit. Helps release RbfA from mature subunits. May play a role in the assembly of ribosomal proteins into the subunit. Circularly permuted GTPase that catalyzes slow GTP hydrolysis, GTPase activity is stimulated by the 30S ribosomal subunit. The chain is Small ribosomal subunit biogenesis GTPase RsgA from Yersinia pseudotuberculosis serotype O:1b (strain IP 31758).